The primary structure comprises 197 residues: uncharacterized protein (197 aa).

The N-terminal stretch at 1–19 (MKLASLLVGSLMLAVPALA) is a signal peptide.

The protein resides in the secreted. This is an uncharacterized protein from Arthroderma benhamiae (strain ATCC MYA-4681 / CBS 112371) (Trichophyton mentagrophytes).